A 929-amino-acid chain; its full sequence is Isoleucine--tRNA ligase (929 aa).

Residues 58 to 68 carry the 'HIGH' region motif; sequence PYANGDIHIGH. E563 contributes to the L-isoleucyl-5'-AMP binding site. The 'KMSKS' region signature appears at 605–609; it reads KMSKS. K608 is a binding site for ATP. C892, C895, C912, and C915 together coordinate Zn(2+).

The protein belongs to the class-I aminoacyl-tRNA synthetase family. IleS type 1 subfamily. As to quaternary structure, monomer. Requires Zn(2+) as cofactor.

The protein localises to the cytoplasm. It carries out the reaction tRNA(Ile) + L-isoleucine + ATP = L-isoleucyl-tRNA(Ile) + AMP + diphosphate. In terms of biological role, catalyzes the attachment of isoleucine to tRNA(Ile). As IleRS can inadvertently accommodate and process structurally similar amino acids such as valine, to avoid such errors it has two additional distinct tRNA(Ile)-dependent editing activities. One activity is designated as 'pretransfer' editing and involves the hydrolysis of activated Val-AMP. The other activity is designated 'posttransfer' editing and involves deacylation of mischarged Val-tRNA(Ile). In Neisseria meningitidis serogroup B (strain ATCC BAA-335 / MC58), this protein is Isoleucine--tRNA ligase.